Here is a 72-residue protein sequence, read N- to C-terminus: Conotoxin Ep11.1 (72 aa).

The first 19 residues, 1-19, serve as a signal peptide directing secretion; it reads MKLCVTFLLILVILPSVTG. A propeptide spanning residues 20–32 is cleaved from the precursor; it reads EKSSKRTLSGAAL. 4 cysteine pairs are disulfide-bonded: cysteine 39/cysteine 53, cysteine 46/cysteine 58, cysteine 52/cysteine 63, and cysteine 57/cysteine 70.

Belongs to the conotoxin I1 superfamily. Expressed by the venom duct.

The protein localises to the secreted. The polypeptide is Conotoxin Ep11.1 (Conus episcopatus (Bishop's cone)).